The following is a 545-amino-acid chain: CTP synthase (545 aa).

The interval 1 to 266 (MTTNYIFVTG…DDYICKRFSL (266 aa)) is amidoligase domain. Ser14 is a CTP binding site. UTP is bound at residue Ser14. Residues 15–20 (SLGKGI) and Asp72 contribute to the ATP site. Residues Asp72 and Glu140 each coordinate Mg(2+). Residues 147–149 (DIE), 187–192 (KTKPTQ), and Lys223 each bind CTP. UTP is bound by residues 187–192 (KTKPTQ) and Lys223. Residue 239–241 (KDV) coordinates ATP. The region spanning 291-542 (TIGMVGKYIE…VKAASEYQKR (252 aa)) is the Glutamine amidotransferase type-1 domain. Residue Gly352 coordinates L-glutamine. The active-site Nucleophile; for glutamine hydrolysis is Cys379. Residues 380-383 (LGMQ), Glu403, and Arg470 contribute to the L-glutamine site. Catalysis depends on residues His515 and Glu517.

This sequence belongs to the CTP synthase family. In terms of assembly, homotetramer.

The enzyme catalyses UTP + L-glutamine + ATP + H2O = CTP + L-glutamate + ADP + phosphate + 2 H(+). It catalyses the reaction L-glutamine + H2O = L-glutamate + NH4(+). It carries out the reaction UTP + NH4(+) + ATP = CTP + ADP + phosphate + 2 H(+). The protein operates within pyrimidine metabolism; CTP biosynthesis via de novo pathway; CTP from UDP: step 2/2. With respect to regulation, allosterically activated by GTP, when glutamine is the substrate; GTP has no effect on the reaction when ammonia is the substrate. The allosteric effector GTP functions by stabilizing the protein conformation that binds the tetrahedral intermediate(s) formed during glutamine hydrolysis. Inhibited by the product CTP, via allosteric rather than competitive inhibition. In terms of biological role, catalyzes the ATP-dependent amination of UTP to CTP with either L-glutamine or ammonia as the source of nitrogen. Regulates intracellular CTP levels through interactions with the four ribonucleotide triphosphates. The protein is CTP synthase of Enterobacter sp. (strain 638).